A 275-amino-acid chain; its full sequence is 4-diphosphocytidyl-2-C-methyl-D-erythritol kinase (275 aa).

Lysine 14 is an active-site residue. Position 98-108 (98-108 (PMGAGLGGGSS)) interacts with ATP. Aspartate 140 is a catalytic residue.

This sequence belongs to the GHMP kinase family. IspE subfamily.

The catalysed reaction is 4-CDP-2-C-methyl-D-erythritol + ATP = 4-CDP-2-C-methyl-D-erythritol 2-phosphate + ADP + H(+). It participates in isoprenoid biosynthesis; isopentenyl diphosphate biosynthesis via DXP pathway; isopentenyl diphosphate from 1-deoxy-D-xylulose 5-phosphate: step 3/6. Its function is as follows. Catalyzes the phosphorylation of the position 2 hydroxy group of 4-diphosphocytidyl-2C-methyl-D-erythritol. This chain is 4-diphosphocytidyl-2-C-methyl-D-erythritol kinase, found in Francisella tularensis subsp. tularensis (strain FSC 198).